Here is a 78-residue protein sequence, read N- to C-terminus: U-scoloptoxin(04)-Er1e (78 aa).

The N-terminal stretch at 1-24 is a signal peptide; sequence MTRHLIFAAMLLVCLFVCWNAVGA. A propeptide spanning residues 25-28 is cleaved from the precursor; that stretch reads RDAR.

Belongs to the scoloptoxin-04 family. Contains 2 disulfide bonds. Expressed by the venom gland.

It localises to the secreted. In Ethmostigmus rubripes (Giant centipede), this protein is U-scoloptoxin(04)-Er1e.